Here is a 45-residue protein sequence, read N- to C-terminus: Photosystem II reaction center protein K (45 aa).

Positions 1–8 (MELAMLLA) are excised as a propeptide. Residues 24 to 44 (LPVIPVFFLLLAFVWQAAVGF) form a helical membrane-spanning segment.

Belongs to the PsbK family. PSII is composed of 1 copy each of membrane proteins PsbA, PsbB, PsbC, PsbD, PsbE, PsbF, PsbH, PsbI, PsbJ, PsbK, PsbL, PsbM, PsbT, PsbX, PsbY, PsbZ, Psb30/Ycf12, peripheral proteins PsbO, CyanoQ (PsbQ), PsbU, PsbV and a large number of cofactors. It forms dimeric complexes.

The protein resides in the cellular thylakoid membrane. Functionally, one of the components of the core complex of photosystem II (PSII). PSII is a light-driven water:plastoquinone oxidoreductase that uses light energy to abstract electrons from H(2)O, generating O(2) and a proton gradient subsequently used for ATP formation. It consists of a core antenna complex that captures photons, and an electron transfer chain that converts photonic excitation into a charge separation. This Trichodesmium erythraeum (strain IMS101) protein is Photosystem II reaction center protein K.